The sequence spans 351 residues: Carbamoyl phosphate synthase small chain (351 aa).

The segment at 1–171 is CPSase; it reads MKGIIYLEDG…IIHIAGNGNK (171 aa). 3 residues coordinate L-glutamine: Ser-45, Gly-219, and Gly-221. A Glutamine amidotransferase type-1 domain is found at 171–351; that stretch reads KVAVMDFGIK…TYLFDQFVNL (181 aa). Cys-246 functions as the Nucleophile in the catalytic mechanism. Positions 247, 250, 288, 290, and 291 each coordinate L-glutamine. Catalysis depends on residues His-331 and Glu-333.

Belongs to the CarA family. As to quaternary structure, composed of two chains; the small (or glutamine) chain promotes the hydrolysis of glutamine to ammonia, which is used by the large (or ammonia) chain to synthesize carbamoyl phosphate. Tetramer of heterodimers (alpha,beta)4.

The catalysed reaction is hydrogencarbonate + L-glutamine + 2 ATP + H2O = carbamoyl phosphate + L-glutamate + 2 ADP + phosphate + 2 H(+). It catalyses the reaction L-glutamine + H2O = L-glutamate + NH4(+). Its pathway is amino-acid biosynthesis; L-arginine biosynthesis; carbamoyl phosphate from bicarbonate: step 1/1. The protein operates within pyrimidine metabolism; UMP biosynthesis via de novo pathway; (S)-dihydroorotate from bicarbonate: step 1/3. Its function is as follows. Small subunit of the glutamine-dependent carbamoyl phosphate synthetase (CPSase). CPSase catalyzes the formation of carbamoyl phosphate from the ammonia moiety of glutamine, carbonate, and phosphate donated by ATP, constituting the first step of 2 biosynthetic pathways, one leading to arginine and/or urea and the other to pyrimidine nucleotides. The small subunit (glutamine amidotransferase) binds and cleaves glutamine to supply the large subunit with the substrate ammonia. This Clostridium acetobutylicum (strain ATCC 824 / DSM 792 / JCM 1419 / IAM 19013 / LMG 5710 / NBRC 13948 / NRRL B-527 / VKM B-1787 / 2291 / W) protein is Carbamoyl phosphate synthase small chain.